The primary structure comprises 351 residues: Photosystem II D2 protein (351 aa).

A helical transmembrane segment spans residues C39 to T59. Residue H116 participates in chlorophyll a binding. Residues G123 to P139 form a helical membrane-spanning segment. Pheophytin a is bound by residues Q128 and N141. Residues V151–A164 form a helical membrane-spanning segment. Residue H196 participates in chlorophyll a binding. A helical transmembrane segment spans residues G206–E226. Residues H213 and F260 each contribute to the a plastoquinone site. Fe cation is bound at residue H213. Position 267 (H267) interacts with Fe cation. A helical transmembrane segment spans residues G277–R293.

It belongs to the reaction center PufL/M/PsbA/D family. PSII is composed of 1 copy each of membrane proteins PsbA, PsbB, PsbC, PsbD, PsbE, PsbF, PsbH, PsbI, PsbJ, PsbK, PsbL, PsbM, PsbT, PsbY, PsbZ, Psb30/Ycf12, at least 3 peripheral proteins of the oxygen-evolving complex and a large number of cofactors. It forms dimeric complexes. The D1/D2 heterodimer binds P680, chlorophylls that are the primary electron donor of PSII, and subsequent electron acceptors. It shares a non-heme iron and each subunit binds pheophytin, quinone, additional chlorophylls, carotenoids and lipids. There is also a Cl(-1) ion associated with D1 and D2, which is required for oxygen evolution. The PSII complex binds additional chlorophylls, carotenoids and specific lipids. serves as cofactor.

Its subcellular location is the plastid. It is found in the chloroplast thylakoid membrane. The enzyme catalyses 2 a plastoquinone + 4 hnu + 2 H2O = 2 a plastoquinol + O2. Photosystem II (PSII) is a light-driven water:plastoquinone oxidoreductase that uses light energy to abstract electrons from H(2)O, generating O(2) and a proton gradient subsequently used for ATP formation. It consists of a core antenna complex that captures photons, and an electron transfer chain that converts photonic excitation into a charge separation. The D1/D2 (PsbA/PsbD) reaction center heterodimer binds P680, the primary electron donor of PSII as well as several subsequent electron acceptors. D2 is needed for assembly of a stable PSII complex. This chain is Photosystem II D2 protein, found in Galdieria sulphuraria (Red alga).